Here is a 375-residue protein sequence, read N- to C-terminus: N5-carboxyaminoimidazole ribonucleotide synthase (375 aa).

Residues Arg-108, Lys-148, Gly-153–Gln-159, Glu-183–Leu-186, Glu-191, His-214, and Asn-266–Glu-267 contribute to the ATP site. Positions Lys-112–Thr-296 constitute an ATP-grasp domain.

This sequence belongs to the PurK/PurT family. Homodimer.

It carries out the reaction 5-amino-1-(5-phospho-beta-D-ribosyl)imidazole + hydrogencarbonate + ATP = 5-carboxyamino-1-(5-phospho-D-ribosyl)imidazole + ADP + phosphate + 2 H(+). It participates in purine metabolism; IMP biosynthesis via de novo pathway; 5-amino-1-(5-phospho-D-ribosyl)imidazole-4-carboxylate from 5-amino-1-(5-phospho-D-ribosyl)imidazole (N5-CAIR route): step 1/2. Catalyzes the ATP-dependent conversion of 5-aminoimidazole ribonucleotide (AIR) and HCO(3)(-) to N5-carboxyaminoimidazole ribonucleotide (N5-CAIR). The protein is N5-carboxyaminoimidazole ribonucleotide synthase of Staphylococcus epidermidis (strain ATCC 12228 / FDA PCI 1200).